We begin with the raw amino-acid sequence, 272 residues long: Phosphoglycolate phosphatase 1 (272 aa).

The Nucleophile role is filled by Asp19. Residues Asp19, Asp21, and Asp182 each contribute to the Mg(2+) site.

The protein belongs to the HAD-like hydrolase superfamily. CbbY/CbbZ/Gph/YieH family. Mg(2+) is required as a cofactor.

It carries out the reaction 2-phosphoglycolate + H2O = glycolate + phosphate. The protein operates within organic acid metabolism; glycolate biosynthesis; glycolate from 2-phosphoglycolate: step 1/1. Its function is as follows. Specifically catalyzes the dephosphorylation of 2-phosphoglycolate. Is involved in the dissimilation of the intracellular 2-phosphoglycolate formed during the DNA repair of 3'-phosphoglycolate ends, a major class of DNA lesions induced by oxidative stress. This Pseudomonas aeruginosa (strain ATCC 15692 / DSM 22644 / CIP 104116 / JCM 14847 / LMG 12228 / 1C / PRS 101 / PAO1) protein is Phosphoglycolate phosphatase 1.